Consider the following 189-residue polypeptide: MTKLVVGLGNPGSKYHETRHNVGFMAIDLMAKELGLTFSEEKTFKAEVASTFLNGEKVYFVKPTTFMNLSGLAVRALLAYYNIPMEDFIVIYDDLDMEVGKLRFRQKGSAGGHNGIKSIIAETGTQEFDRIKIGIGRPQKGMTVVNHVLGKFSEDDYAMILLTLDKVETALHHYLKTNDFEDTMRRYNG.

Tyr-15 lines the tRNA pocket. His-20 (proton acceptor) is an active-site residue. The tRNA site is built by Phe-66, Asn-68, and Asn-114.

The protein belongs to the PTH family. Monomer.

Its subcellular location is the cytoplasm. It catalyses the reaction an N-acyl-L-alpha-aminoacyl-tRNA + H2O = an N-acyl-L-amino acid + a tRNA + H(+). In terms of biological role, hydrolyzes ribosome-free peptidyl-tRNAs (with 1 or more amino acids incorporated), which drop off the ribosome during protein synthesis, or as a result of ribosome stalling. Functionally, catalyzes the release of premature peptidyl moieties from peptidyl-tRNA molecules trapped in stalled 50S ribosomal subunits, and thus maintains levels of free tRNAs and 50S ribosomes. In Streptococcus thermophilus (strain CNRZ 1066), this protein is Peptidyl-tRNA hydrolase.